Reading from the N-terminus, the 139-residue chain is ATP synthase epsilon chain 2 (139 aa).

The protein belongs to the ATPase epsilon chain family. As to quaternary structure, F-type ATPases have 2 components, CF(1) - the catalytic core - and CF(0) - the membrane proton channel. CF(1) has five subunits: alpha(3), beta(3), gamma(1), delta(1), epsilon(1). CF(0) has three main subunits: a, b and c.

It is found in the cell inner membrane. In terms of biological role, produces ATP from ADP in the presence of a proton gradient across the membrane. The chain is ATP synthase epsilon chain 2 (atpC2) from Ralstonia nicotianae (strain ATCC BAA-1114 / GMI1000) (Ralstonia solanacearum).